Consider the following 1136-residue polypeptide: Receptor-type guanylate cyclase gcy-4 (1136 aa).

The first 21 residues, 1–21 (MRQLNYYIFISTILTYNLTHG), serve as a signal peptide directing secretion. At 22–485 (QGPRPVIRVG…CPLPIFEQYR (464 aa)) the chain is on the extracellular side. N40, N194, N252, N351, N377, N386, and N438 each carry an N-linked (GlcNAc...) asparagine glycan. The chain crosses the membrane as a helical span at residues 486–506 (ALVIVAIAVTILILLAIIICM). At 507-1136 (SSKIRNRRVE…LRREMMRVEV (630 aa)) the chain is on the cytoplasmic side. The 301-residue stretch at 533-833 (LPMHRRASKS…EDNLMDHVFS (301 aa)) folds into the Protein kinase domain. A disordered region spans residues 536 to 565 (HRRASKSSQESETESASETENFTSKSGDTM). A Guanylate cyclase domain is found at 891–1021 (TVFFSDLVKF…DTVNTASRME (131 aa)).

Belongs to the adenylyl cyclase class-4/guanylyl cyclase family. As to expression, expression is biased toward ASE right (ASER) sensory neuron.

The protein resides in the cell membrane. It carries out the reaction GTP = 3',5'-cyclic GMP + diphosphate. Guanylate cyclase involved in the production of the second messenger cGMP. Regulates chemotaxis responses toward Br(1-) and I(1-) salt ions in ASE right (ASER) sensory neuron. The sequence is that of Receptor-type guanylate cyclase gcy-4 from Caenorhabditis elegans.